We begin with the raw amino-acid sequence, 448 residues long: MSKQLVSIIDVPKHIGEEITIGAWVANKSGKGKIAFLQLRDGTAFFQGVAFKPNFIEKFGEEEGLEKFDTIKHLSQETSIYVTGMVKEDERSKFGYELDITDIEVIGESQGYPITPKEHGTDFLMDNRHLWLRSRKQMAIQQIRNAIIYATYDFFDKNGFIKFDSPILSSNAAEDSTELFETDYFGTPAFLSQSGQLYLEAGAMALGRVFDFGPVFRAEKSKTRRHLTEFWMMDAEYSFLSHDESLDLQEAYVKALIQGAIDRAPQALEILERDVDLLKKYIAEPFKRVSYDEAIDLLQAHEKDEDTDYEHLEHGDDFGSPHETWISNYFGVPTFVVNYPASFKAFYMKPVPGNPERVLCADLLAPEGYGEIIGGSMREDDYDALVAKMEELGMDRSEYEFYLDLRKYGSVPHGGFGIGIERMVTFVAGTKHIREAIPFPRMLHRIKP.

Belongs to the class-II aminoacyl-tRNA synthetase family. As to quaternary structure, homodimer.

It localises to the cytoplasm. The catalysed reaction is tRNA(Asn) + L-asparagine + ATP = L-asparaginyl-tRNA(Asn) + AMP + diphosphate + H(+). The sequence is that of Asparagine--tRNA ligase from Streptococcus thermophilus (strain ATCC BAA-491 / LMD-9).